Consider the following 183-residue polypeptide: Ribulose bisphosphate carboxylase small subunit, chloroplastic 3 (183 aa).

The transit peptide at 1–57 directs the protein to the chloroplast; that stretch reads MASSLMSNAATTMAAATTTAQANMVAPFNGLKSVSAFPVTRKNNDITSVASNGGRVQ.

The protein belongs to the RuBisCO small chain family. In terms of assembly, heterohexadecamer of 8 large and 8 small subunits.

It localises to the plastid. The protein localises to the chloroplast. Its function is as follows. RuBisCO catalyzes two reactions: the carboxylation of D-ribulose 1,5-bisphosphate, the primary event in carbon dioxide fixation, as well as the oxidative fragmentation of the pentose substrate. Both reactions occur simultaneously and in competition at the same active site. Although the small subunit is not catalytic it is essential for maximal activity. The sequence is that of Ribulose bisphosphate carboxylase small subunit, chloroplastic 3 from Mesembryanthemum crystallinum (Common ice plant).